Here is a 353-residue protein sequence, read N- to C-terminus: Photosystem II protein D1 (353 aa).

Thr-2 bears the N-acetylthreonine mark. Residue Thr-2 is modified to Phosphothreonine. A run of 3 helical transmembrane segments spans residues 29 to 46 (YIGW…TATS), 118 to 133 (HFLL…EWEL), and 142 to 156 (WIAV…AATA). Residue His-118 participates in chlorophyll a binding. Residue Tyr-126 coordinates pheophytin a. 2 residues coordinate [CaMn4O5] cluster: Asp-170 and Glu-189. A helical transmembrane segment spans residues 197-218 (FHMLGVAGVFGGSLFSAMHGSL). A chlorophyll a-binding site is contributed by His-198. A quinone-binding positions include His-215 and 264-265 (SF). His-215 contacts Fe cation. His-272 contacts Fe cation. A helical transmembrane segment spans residues 274–288 (FLAAWPVVGIWFTAL). 3 residues coordinate [CaMn4O5] cluster: His-332, Glu-333, and Ala-344. A propeptide spanning residues 345 to 353 (AIEAPAVNG) is cleaved from the precursor.

The protein belongs to the reaction center PufL/M/PsbA/D family. In terms of assembly, PSII is composed of 1 copy each of membrane proteins PsbA, PsbB, PsbC, PsbD, PsbE, PsbF, PsbH, PsbI, PsbJ, PsbK, PsbL, PsbM, PsbT, PsbX, PsbY, PsbZ, Psb30/Ycf12, at least 3 peripheral proteins of the oxygen-evolving complex and a large number of cofactors. It forms dimeric complexes. The cofactor is The D1/D2 heterodimer binds P680, chlorophylls that are the primary electron donor of PSII, and subsequent electron acceptors. It shares a non-heme iron and each subunit binds pheophytin, quinone, additional chlorophylls, carotenoids and lipids. D1 provides most of the ligands for the Mn4-Ca-O5 cluster of the oxygen-evolving complex (OEC). There is also a Cl(-1) ion associated with D1 and D2, which is required for oxygen evolution. The PSII complex binds additional chlorophylls, carotenoids and specific lipids.. In terms of processing, tyr-161 forms a radical intermediate that is referred to as redox-active TyrZ, YZ or Y-Z. Post-translationally, C-terminally processed by CTPA; processing is essential to allow assembly of the oxygen-evolving complex and thus photosynthetic growth.

Its subcellular location is the plastid. The protein resides in the chloroplast thylakoid membrane. The catalysed reaction is 2 a plastoquinone + 4 hnu + 2 H2O = 2 a plastoquinol + O2. Photosystem II (PSII) is a light-driven water:plastoquinone oxidoreductase that uses light energy to abstract electrons from H(2)O, generating O(2) and a proton gradient subsequently used for ATP formation. It consists of a core antenna complex that captures photons, and an electron transfer chain that converts photonic excitation into a charge separation. The D1/D2 (PsbA/PsbD) reaction center heterodimer binds P680, the primary electron donor of PSII as well as several subsequent electron acceptors. The protein is Photosystem II protein D1 of Conocephalum japonicum (Liverwort).